The following is a 475-amino-acid chain: Putative response regulator NtrX-like (475 aa).

Residues Asp5–Cys121 enclose the Response regulatory domain. Residue Asp54 is modified to 4-aspartylphosphate. In terms of domain architecture, Sigma-54 factor interaction spans Leu143 to Ile369. ATP contacts are provided by residues Gly171–Glu178 and Ala232–Glu241.

In terms of biological role, member of the two-component regulatory system RT0550/RT0603. This Rickettsia typhi (strain ATCC VR-144 / Wilmington) protein is Putative response regulator NtrX-like.